Here is a 67-residue protein sequence, read N- to C-terminus: Protein AaeX (67 aa).

The next 2 helical transmembrane spans lie at 10–30 (FGLS…LFFV) and 43–63 (FVWH…YLLF).

The protein belongs to the AaeX family.

The protein resides in the cell membrane. This is Protein AaeX from Pectobacterium carotovorum subsp. carotovorum (strain PC1).